A 318-amino-acid chain; its full sequence is NADH-ubiquinone oxidoreductase chain 1 (318 aa).

8 helical membrane passes run Thr-3–Val-23, Phe-69–Leu-89, Leu-100–Gly-120, Ala-135–Leu-155, His-171–Ala-191, Val-213–Leu-233, Glu-253–Ile-273, and Leu-294–Ile-314.

Belongs to the complex I subunit 1 family.

It localises to the mitochondrion inner membrane. It carries out the reaction a ubiquinone + NADH + 5 H(+)(in) = a ubiquinol + NAD(+) + 4 H(+)(out). In terms of biological role, core subunit of the mitochondrial membrane respiratory chain NADH dehydrogenase (Complex I) that is believed to belong to the minimal assembly required for catalysis. Complex I functions in the transfer of electrons from NADH to the respiratory chain. The immediate electron acceptor for the enzyme is believed to be ubiquinone. This is NADH-ubiquinone oxidoreductase chain 1 (MT-ND1) from Choloepus didactylus (Southern two-toed sloth).